The sequence spans 1706 residues: Bifunctional hemolysin/adenylate cyclase (1706 aa).

The tract at residues 1 to 399 (MQQSHQAGYA…RRPSLGAVER (399 aa)) is a, catalytic. Residue 349–356 (AYGVAGKS) coordinates ATP. The tract at residues 367-405 (GVPGGRSKSSPDVLETVPASPGLRRPSLGAVERQDSGYD) is disordered. The segment at 400-912 (QDSGYDSLDG…LKHSIKLEVI (513 aa)) is b, Ala/Gly-rich. Residues 500 to 698 (LSAAVFGLGE…SVVGAPVAVV (199 aa)) are required for interaction with CyaC. 2 N6-palmitoyl lysine lipidation sites follow: K860 and K983. The interval 913-1656 (GGDGDDVVLA…RDADHRVEAI (744 aa)) is c. Hemolysin-type calcium-binding repeat units follow at residues 1014-1031 (IGGAGNDSITGNAHDNFL), 1032-1049 (AGGAGDDRLDGGAGNDTL), 1050-1067 (VGGEGHNTVVGGAGDDVF), 1155-1172 (WGDDGNDTIHGRGGDDIL), 1173-1190 (RGGLGLDTLYGEDGNDIF), 1279-1296 (MGQGGDDTVRGGDGDDLL), 1297-1314 (FGGDGNDMLYGDAGNDTL), 1315-1332 (YGGLGDDTLEGGAGNDWF), 1335-1352 (TPAREHDVLRGGAGVDTV), 1411-1428 (TGDAQANVLRGAGGADVL), 1429-1446 (AGGEGDDVLLGGDGDDQL), 1447-1464 (SGDAGRDRLYGEAGDDWF), 1468-1484 (AANAGNLLDGGDGNDTV), 1537-1554 (IGDAGANVLNGLAGNDVL), 1555-1572 (SGGAGDDVLLGDEGSDLL), 1573-1590 (SGDAGNDDLFGGQGDDTY), and 1603-1620 (ESGGGHDTIRINAGADQL). The segment at 1657-1706 (HAANQAIDPAGIEKLVEAMAQYPDPGAAAAAPPAARVPDTLMQSLAVNWR) is d, Asp/Gly-rich.

The protein in the N-terminal section; belongs to the adenylyl cyclase class-2 family. This sequence in the C-terminal section; belongs to the RTX prokaryotic toxin family. In terms of processing, released in a processed form. Palmitoylated at Lys-860 and Lys-983 by CyaC. The toxin only becomes active when modified in position Lys-983: palmitoylation is required for efficient membrane insertion and pore formation of the acylated Hemolysin chain.

The protein resides in the secreted. Its subcellular location is the host cell membrane. It catalyses the reaction ATP = 3',5'-cyclic AMP + diphosphate. Activated by host calmodulin. Bifunctional adenylate cyclase toxin-hemolysin that plays a crucial role in host colonization. It causes whooping cough by acting on mammalian cells by elevating cAMP-concentration and thus disrupts normal cell function. In terms of biological role, adenylate cyclase that is activated by host intracellular calmodulin and catalyzes un-regulated conversion of ATP to cAMP, thereby impairing microbicidal functions of immune effector cells and inducing apoptosis of lung macrophages. Its function is as follows. Hemolysin that forms small cation-selective membrane channels, leading to hemolytic activity. The hemolytic activity of CyaA is weak compared with that of the HlyA of E.coli. The protein is Bifunctional hemolysin/adenylate cyclase (cya) of Bordetella bronchiseptica (strain ATCC BAA-588 / NCTC 13252 / RB50) (Alcaligenes bronchisepticus).